The following is a 323-amino-acid chain: o-succinylbenzoate synthase (323 aa).

The active-site Proton donor is K134. Mg(2+)-binding residues include D162, E191, and D214. K236 functions as the Proton acceptor in the catalytic mechanism.

This sequence belongs to the mandelate racemase/muconate lactonizing enzyme family. MenC type 1 subfamily. A divalent metal cation is required as a cofactor.

The enzyme catalyses (1R,6R)-6-hydroxy-2-succinyl-cyclohexa-2,4-diene-1-carboxylate = 2-succinylbenzoate + H2O. It functions in the pathway quinol/quinone metabolism; 1,4-dihydroxy-2-naphthoate biosynthesis; 1,4-dihydroxy-2-naphthoate from chorismate: step 4/7. The protein operates within quinol/quinone metabolism; menaquinone biosynthesis. In terms of biological role, converts 2-succinyl-6-hydroxy-2,4-cyclohexadiene-1-carboxylate (SHCHC) to 2-succinylbenzoate (OSB). In Yersinia enterocolitica serotype O:8 / biotype 1B (strain NCTC 13174 / 8081), this protein is o-succinylbenzoate synthase.